The primary structure comprises 226 residues: MTDERAAGGGATRRRKSLSEKQISILEFIQRTIAGQGYPPSMREIGDAVGLASLSSVTHQLNQLELSGYLRRDPNRPRALEVLIDLPGTGTAESGEPSTPVGDAAMVPMVGRIAAGIPITAEQMVEEVFPLPRQLVGKGDLFMLRVVGDSMIDAAICDGDWVVVRQQKTAENGDIVAAMLDDEATVKVFRQRDGHTWLLARNSAFEPILGDFAEVVGKVVAVMRSV.

Positions 42-62 form a DNA-binding region, H-T-H motif; sequence MREIGDAVGLASLSSVTHQLN. Residues Ser-150 and Lys-187 each act as for autocatalytic cleavage activity in the active site.

It belongs to the peptidase S24 family. As to quaternary structure, homodimer.

It carries out the reaction Hydrolysis of Ala-|-Gly bond in repressor LexA.. Represses a number of genes involved in the response to DNA damage (SOS response), including recA and lexA. In the presence of single-stranded DNA, RecA interacts with LexA causing an autocatalytic cleavage which disrupts the DNA-binding part of LexA, leading to derepression of the SOS regulon and eventually DNA repair. This chain is LexA repressor, found in Clavibacter sepedonicus (Clavibacter michiganensis subsp. sepedonicus).